Consider the following 131-residue polypeptide: Squamosa promoter-binding protein 1 (131 aa).

Positions 1-10 (MDTSKGEGKR) are enriched in basic and acidic residues. The segment at 1 to 52 (MDTSKGEGKRVIKLPGSQEQGEEEDDIGEDSKKTRALTPSGKRASGSTQRSC) is disordered. The segment at 49 to 126 (QRSCQVENCA…AGHNERRRKS (78 aa)) adopts an SBP-type zinc-finger fold. Zn(2+) contacts are provided by Cys52, Cys57, Cys74, His77, Cys93, Cys96, His100, and Cys112. A Bipartite nuclear localization signal motif is present at residues 109–125 (KRSCRRRLAGHNERRRK).

The protein localises to the nucleus. Probable transcriptional factor. Binds to the promoter of the SQUAMOSA gene. This is Squamosa promoter-binding protein 1 (SBP1) from Antirrhinum majus (Garden snapdragon).